A 312-amino-acid polypeptide reads, in one-letter code: Putative endonuclease 4 (312 aa).

Residues histidine 84, histidine 127, glutamate 166, aspartate 202, histidine 205, histidine 239, aspartate 252, histidine 254, and glutamate 284 each coordinate Zn(2+).

Belongs to the AP endonuclease 2 family. It depends on Zn(2+) as a cofactor.

The enzyme catalyses Endonucleolytic cleavage to 5'-phosphooligonucleotide end-products.. Functionally, endonuclease IV plays a role in DNA repair. It cleaves phosphodiester bonds at apurinic or apyrimidinic sites (AP sites) to produce new 5'-ends that are base-free deoxyribose 5-phosphate residues. This chain is Putative endonuclease 4, found in Acanthamoeba polyphaga (Amoeba).